The primary structure comprises 561 residues: Guanine nucleotide-binding protein-like 3 (561 aa).

Residues 28 to 46 (HNRKLKKAAKKQGISRKAK) show a composition bias toward basic residues. 2 disordered regions span residues 28–58 (HNRKLKKAAKKQGISRKAKKDIGVPNSAPFK) and 76–110 (KEQNKIVKQQEKAAKRKKEKDAASSVKEPAAKKAK). The stretch at 53 to 98 (NSAPFKEEVLREAEQRKQELETLKEQNKIVKQQEKAAKRKKEKDAA) forms a coiled coil. Residues 76–88 (KEQNKIVKQQEKA) are compositionally biased toward basic and acidic residues. The CP-type G domain occupies 133 to 319 (CQELNKVIEA…MIDSPGILAA (187 aa)). GTP-binding positions include 181-184 (NKID), 268-275 (GFPNVGKS), and 312-315 (DSPG). The tract at residues 486 to 532 (ATTTDAEEEKMDTTTNTDEPEAESHISSTVEPIQEPTEKRKDKPAKE) is disordered. The segment covering 521-532 (PTEKRKDKPAKE) has biased composition (basic and acidic residues).

The protein belongs to the TRAFAC class YlqF/YawG GTPase family.

It is found in the nucleus. The protein resides in the nucleolus. May play a role in regulating cellular proliferation. This is Guanine nucleotide-binding protein-like 3 (gnl3) from Danio rerio (Zebrafish).